Here is a 279-residue protein sequence, read N- to C-terminus: Glutamate racemase (279 aa).

Substrate contacts are provided by residues 13-14 and 45-46; these read DS and YG. The active-site Proton donor/acceptor is the C76. 77 to 78 contributes to the substrate binding site; that stretch reads NT. The active-site Proton donor/acceptor is the C185. 186-187 contacts substrate; the sequence is TH.

This sequence belongs to the aspartate/glutamate racemases family.

The enzyme catalyses L-glutamate = D-glutamate. It functions in the pathway cell wall biogenesis; peptidoglycan biosynthesis. In terms of biological role, provides the (R)-glutamate required for cell wall biosynthesis. The sequence is that of Glutamate racemase from Synechocystis sp. (strain ATCC 27184 / PCC 6803 / Kazusa).